Reading from the N-terminus, the 142-residue chain is HTH-type transcriptional repressor NsrR (142 aa).

The HTH rrf2-type domain occupies 2–129 (QLTSFTDYGL…DRHTLAELVE (128 aa)). A DNA-binding region (H-T-H motif) is located at residues 28-51 (ITEVTQVYGVSRNHMVKIINQLSH). The [2Fe-2S] cluster site is built by C91, C96, and C102.

[2Fe-2S] cluster is required as a cofactor.

In terms of biological role, nitric oxide-sensitive repressor of genes involved in protecting the cell against nitrosative stress. May require iron for activity. The protein is HTH-type transcriptional repressor NsrR of Proteus mirabilis (strain HI4320).